The sequence spans 140 residues: Glycine cleavage system H protein (140 aa).

Residues 22–104 (EVVIGITRFA…YGKGWMLRLK (83 aa)) form the Lipoyl-binding domain. Lys-63 carries the post-translational modification N6-lipoyllysine.

This sequence belongs to the GcvH family. The glycine cleavage system is composed of four proteins: P, T, L and H. (R)-lipoate serves as cofactor.

Functionally, the glycine cleavage system catalyzes the degradation of glycine. The H protein shuttles the methylamine group of glycine from the P protein to the T protein. This is Glycine cleavage system H protein from Magnetococcus marinus (strain ATCC BAA-1437 / JCM 17883 / MC-1).